Reading from the N-terminus, the 313-residue chain is Beta-lactamase (313 aa).

The N-terminal stretch at 1–15 is a signal peptide; that stretch reads MQRIGVTDYTILGTV. Residue Ser190 is the Acyl-ester intermediate of the active site.

This sequence belongs to the class-C beta-lactamase family.

It carries out the reaction a beta-lactam + H2O = a substituted beta-amino acid. Functionally, upon expression in E.coli enables the latter to utilize penicillin as a carbon source. The polypeptide is Beta-lactamase (penA) (Burkholderia multivorans (strain ATCC 17616 / 249)).